The sequence spans 95 residues: Secretoglobin family 2A member 1 (95 aa).

Residues M1–A18 form the signal peptide. N-linked (GlcNAc...) asparagine glycans are attached at residues N35 and N72.

The protein belongs to the secretoglobin family. Lipophilin subfamily. As to quaternary structure, prostatein is composed of three different peptides called C1, C2 and C3. These form covalent C1:C3 (F) and C2:C3 (S) heterodimers whose non-covalent association forms tetrameric (C1:C3/C3:C2) prostatein molecules. In terms of tissue distribution, expressed at very low level in ventral prostate.

The protein localises to the secreted. Functionally, part of prostatein which is the major secretory glycoprotein of ventral prostate gland. Steroid-binding protein; can bind non-polar steroids, cholesterol and a group of small proline-rich peptides. The protein is Secretoglobin family 2A member 1 of Rattus norvegicus (Rat).